The primary structure comprises 350 residues: Glutamyl-tRNA reductase (350 aa).

Residues 53 to 56 (TCNR), serine 105, 110 to 112 (ETQ), and glutamine 116 contribute to the substrate site. Cysteine 54 functions as the Nucleophile in the catalytic mechanism. An NADP(+)-binding site is contributed by 185–190 (GAGETA).

The protein belongs to the glutamyl-tRNA reductase family. As to quaternary structure, homodimer.

The catalysed reaction is (S)-4-amino-5-oxopentanoate + tRNA(Glu) + NADP(+) = L-glutamyl-tRNA(Glu) + NADPH + H(+). It participates in porphyrin-containing compound metabolism; protoporphyrin-IX biosynthesis; 5-aminolevulinate from L-glutamyl-tRNA(Glu): step 1/2. In terms of biological role, catalyzes the NADPH-dependent reduction of glutamyl-tRNA(Glu) to glutamate 1-semialdehyde (GSA). This Deinococcus radiodurans (strain ATCC 13939 / DSM 20539 / JCM 16871 / CCUG 27074 / LMG 4051 / NBRC 15346 / NCIMB 9279 / VKM B-1422 / R1) protein is Glutamyl-tRNA reductase.